Consider the following 515-residue polypeptide: Gap junction alpha-9 protein (515 aa).

The Cytoplasmic segment spans residues 1 to 19; it reads MGDWNLLGDTLEEVHIHST. A helical membrane pass occupies residues 20 to 40; the sequence is MIGKIWLTILFIFRMLVLGVA. The Extracellular portion of the chain corresponds to 41 to 77; the sequence is AEDVWNDEQSGFICNTEQPGCRNVCYDQAFPISLIRY. The chain crosses the membrane as a helical span at residues 78 to 98; sequence WVLQVIFVSSPSLVYMGHALY. Residues 99 to 166 lie on the Cytoplasmic side of the membrane; that stretch reads RLRVLEEERQ…YVIHIFTRSV (68 aa). Residues 167-187 traverse the membrane as a helical segment; that stretch reads VEVGFMIGQYLLYGFHLEPLF. Topologically, residues 188-209 are extracellular; sequence KCHGHPCPNIIDCFVSRPTEKT. The helical transmembrane segment at 210 to 230 threads the bilayer; that stretch reads IFLLFMQSIATISLFLNILEI. Residues 231-515 are Cytoplasmic-facing; the sequence is FHLGFKKIKR…GRRVPTDLQI (285 aa). Over residues 370–380 the composition is skewed to basic and acidic residues; it reads KRETEGKDSKR. Disordered regions lie at residues 370-400 and 428-472; these read KRETEGKDSKRNYYSRGHRSIPGVAIDGENN and SSTE…NTAD. Over residues 456-472 the composition is skewed to polar residues; that stretch reads PPSQGDSQSLDIPNTAD.

This sequence belongs to the connexin family. Alpha-type (group II) subfamily. A connexon is composed of a hexamer of connexins. Highly abundant in skeletal muscle. Also detected in testis.

It is found in the cell membrane. The protein localises to the cell junction. The protein resides in the gap junction. One gap junction consists of a cluster of closely packed pairs of transmembrane channels, the connexons, through which materials of low MW diffuse from one cell to a neighboring cell. The sequence is that of Gap junction alpha-9 protein (GJA9) from Homo sapiens (Human).